A 572-amino-acid chain; its full sequence is Butyrate--CoA ligase AAE11, peroxisomal (572 aa).

Residues 570-572 (SRL) carry the Microbody targeting signal motif.

Belongs to the ATP-dependent AMP-binding enzyme family. Expressed in flowers.

Its subcellular location is the peroxisome. The catalysed reaction is a medium-chain fatty acid + ATP + CoA = a medium-chain fatty acyl-CoA + AMP + diphosphate. Its function is as follows. Butyrate--CoA ligase that is active in vitro with medium-chain fatty acids, with a preference for hexanoate and octanoate. This Arabidopsis thaliana (Mouse-ear cress) protein is Butyrate--CoA ligase AAE11, peroxisomal (AAE11).